Consider the following 832-residue polypeptide: Spindle pole body component alp6 (832 aa).

An interaction with mzt1 region spans residues 1–186; that stretch reads MSEIHVKTAL…STETSSVQHT (186 aa). The residue at position 286 (threonine 286) is a Phosphothreonine.

Belongs to the TUBGCP family. As to quaternary structure, part of the gamma-tubulin complex. Interacts directly with mzt1. Interacts with mto1. Interacts with mto2.

Its subcellular location is the cytoplasm. The protein resides in the cytoskeleton. The protein localises to the microtubule organizing center. It is found in the spindle pole body. Its function is as follows. Component of the gamma tubule complex that is required for the regulation of both interphase microtubules and mitotic bipolar spindles. The protein is Spindle pole body component alp6 (alp6) of Schizosaccharomyces pombe (strain 972 / ATCC 24843) (Fission yeast).